A 97-amino-acid polypeptide reads, in one-letter code: Ferredoxin-thioredoxin reductase, variable chain (97 aa).

Belongs to the ferredoxin thioredoxin reductase alpha subunit family. Heterodimer of subunit A (variable subunit) and subunit B (catalytic subunit). Heterodimeric FTR forms a complex with ferredoxin and thioredoxin.

It localises to the plastid. The protein localises to the chloroplast. Variable subunit of the ferredoxin-thioredoxin reductase (FTR), which catalyzes the two-electron reduction of thioredoxins by the electrons provided by reduced ferredoxin. In Zea mays (Maize), this protein is Ferredoxin-thioredoxin reductase, variable chain.